A 223-amino-acid chain; its full sequence is Ubiquitin carboxyl-terminal hydrolase isozyme L1 (223 aa).

Met1 carries the N-acetylmethionine modification. One can recognise a UCH catalytic domain in the interval 2 to 221 (QLKPMEINPE…VRFSAVALCK (220 aa)). Residues 5 to 10 (PMEINP) are interaction with ubiquitin. The active-site Nucleophile is Cys90. At Ser125 the chain carries Phosphoserine. The active-site Proton donor is the His161. An interaction with ubiquitin region spans residues 211–216 (EVRFSA). Cys220 is lipidated: S-farnesyl cysteine. Positions 221-223 (KCA) are cleaved as a propeptide — removed in mature form.

Belongs to the peptidase C12 family. In terms of assembly, monomer. Homodimer. Interacts with COPS5 and SNCA. O-glycosylated.

Its subcellular location is the cytoplasm. It is found in the endoplasmic reticulum membrane. The catalysed reaction is Thiol-dependent hydrolysis of ester, thioester, amide, peptide and isopeptide bonds formed by the C-terminal Gly of ubiquitin (a 76-residue protein attached to proteins as an intracellular targeting signal).. Ubiquitin-protein hydrolase involved both in the processing of ubiquitin precursors and of ubiquitinated proteins. This enzyme is a thiol protease that recognizes and hydrolyzes a peptide bond at the C-terminal glycine of ubiquitin. Also binds to free monoubiquitin and may prevent its degradation in lysosomes. The homodimer may have ATP-independent ubiquitin ligase activity. The chain is Ubiquitin carboxyl-terminal hydrolase isozyme L1 (UCHL1) from Monodelphis domestica (Gray short-tailed opossum).